Consider the following 319-residue polypeptide: Beta-ketoacyl-[acyl-carrier-protein] synthase III (319 aa).

Active-site residues include Cys-115 and His-246. Residues 247–251 (QANLR) are ACP-binding. The active site involves Asn-276.

This sequence belongs to the thiolase-like superfamily. FabH family. Homodimer.

The protein localises to the cytoplasm. The enzyme catalyses malonyl-[ACP] + acetyl-CoA + H(+) = 3-oxobutanoyl-[ACP] + CO2 + CoA. The protein operates within lipid metabolism; fatty acid biosynthesis. In terms of biological role, catalyzes the condensation reaction of fatty acid synthesis by the addition to an acyl acceptor of two carbons from malonyl-ACP. Catalyzes the first condensation reaction which initiates fatty acid synthesis and may therefore play a role in governing the total rate of fatty acid production. Possesses both acetoacetyl-ACP synthase and acetyl transacylase activities. Its substrate specificity determines the biosynthesis of branched-chain and/or straight-chain of fatty acids. The chain is Beta-ketoacyl-[acyl-carrier-protein] synthase III from Coxiella burnetii (strain RSA 493 / Nine Mile phase I).